The primary structure comprises 100 residues: Acylphosphatase (100 aa).

The Acylphosphatase-like domain occupies 3 to 92 (RRSYSVIGRV…PLPDTFDIRF (90 aa)). Residues Arg18 and Asn36 contribute to the active site. The interval 76–100 (DDPAHEGPLPDTFDIRFRAPGSASE) is disordered.

This sequence belongs to the acylphosphatase family.

The enzyme catalyses an acyl phosphate + H2O = a carboxylate + phosphate + H(+). This chain is Acylphosphatase (acyP), found in Nitratidesulfovibrio vulgaris (strain ATCC 29579 / DSM 644 / CCUG 34227 / NCIMB 8303 / VKM B-1760 / Hildenborough) (Desulfovibrio vulgaris).